The sequence spans 442 residues: F-box/FBD/LRR-repeat protein At2g26030 (442 aa).

Residues 3–49 (CDRICELPDSLLTQVLSYLPTIDSVKTSVLSKRWEFLWLRVPVLDLK) enclose the F-box domain. LRR repeat units follow at residues 128–160 (CNTL…HLED), 162–187 (WYYD…VLIR), 188–214 (PIDF…RLTF), 234–260 (YLNF…DIDS), 278–309 (KRDI…DRYS), and 324–352 (QAAV…ILDF). The region spanning 358-410 (PEQDGLTYVPQCLLSSLECVEIRELIMGEETGEKLVRYFLKNSVVLKKLILRL) is the FBD domain.

This is F-box/FBD/LRR-repeat protein At2g26030 from Arabidopsis thaliana (Mouse-ear cress).